The sequence spans 467 residues: Putative pentatricopeptide repeat-containing protein At1g10330 (467 aa).

10 PPR repeats span residues 50-84 (TKCV…HVQP), 85-119 (NNLT…GFLW), 120-150 (DPFV…ILNP), 151-181 (CVVA…MPVT), 182-216 (DVVS…ERAV), 220-256 (NEAT…EIIL), 257-287 (TTTL…IRDK), 288-322 (KVCA…YVHP), 323-358 (NGIT…KIIP), and 359-389 (TSEH…LPFE). The segment at 394–467 (VLGALLGACK…RKIPAYSVLT (74 aa)) is type E motif; degenerate.

The protein belongs to the PPR family. PCMP-E subfamily.

The sequence is that of Putative pentatricopeptide repeat-containing protein At1g10330 (PCMP-E71) from Arabidopsis thaliana (Mouse-ear cress).